The chain runs to 134 residues: Biopolymer transport protein exbD2 (134 aa).

Residues 1–17 (MRLGRRTSKQEEAQIDL) lie on the Cytoplasmic side of the membrane. The chain crosses the membrane as a helical span at residues 18–38 (TSMLDIVFIMLIFFIVTSSFV). Residues 39–134 (RESGVEVNRP…KSIALAAEKP (96 aa)) lie on the Periplasmic side of the membrane.

It belongs to the ExbD/TolR family. In terms of assembly, the accessory proteins ExbB and ExbD seem to form a complex with TonB.

The protein resides in the cell inner membrane. Functionally, involved in the TonB-dependent energy-dependent transport of various receptor-bound substrates. The sequence is that of Biopolymer transport protein exbD2 (exbD2) from Vibrio cholerae serotype O1 (strain ATCC 39315 / El Tor Inaba N16961).